The following is a 298-amino-acid chain: Proton-activated chloride channel (298 aa).

Over 1 to 12 (MPIGFNKACLKN) the chain is Cytoplasmic. Residues 13 to 33 (VFTVILVLIYLALTAVAVFLA) traverse the membrane as a helical segment. The Extracellular portion of the chain corresponds to 34–245 (YQTISDFMDK…RDPFIQQVKD (212 aa)). Residues 246-266 (IVTANPWNTIAILCGVFMALF) form a helical membrane-spanning segment. The Cytoplasmic portion of the chain corresponds to 267 to 298 (KAADFAKLSIKWMIRIRKRHIRAKMREMNQIS).

This sequence belongs to the proton-activated chloride channel family.

The protein resides in the cell membrane. It carries out the reaction chloride(in) = chloride(out). Chloride channel gated by pH that facilitates the entry of chloride ions into cells upon exposure to extracellular acidic pH. Displays channel activity with distinct kinetic properties compared to the human ortholog channel. This is Proton-activated chloride channel from Danio rerio (Zebrafish).